A 529-amino-acid chain; its full sequence is MPAAPDYPSAPDLVAPKRALLSVSDKTGLVDAAKILHAAGVELVSTGGTKAAIAAAGVPVKDVSDLTGFPEMMDGRVKTLHPVVHGGLLGVRDAADHAKAMADHGIGGIDILYVNLYPFEATVAKGGSYAECVENIDIGGPAMIRSAAKNHGYVAVCTDPSDLAEVLEALKAGGTTLALRQQLAARAYARTAAYDAAISAWFAEALGQDFPARKSIAGTLRQTMRYGENPHQKAAFYTFPNPRPGVATATQLQGKELSYNNINDTDAAFELIAEFDPAAGPAVAIIKHANPCGVAVGATQREAYERALACDPTSAFGGIVAVNSRLTREAAEAMVEIFTEVVIAPEADEDAIAVFAAKKNLRLLVTGGLPDALSTGDTFKSVAGGFLVQSRDDARIKASDLKIVTQRQPTEEEVRDMLFAFTVGKHVKSNAIVYARAGQTLGVGAGQMNRKDSARIAALRAADFGLDLKGCACASEAFFPFADGLIQAAEAGATAIIQPGGSMRDPEVIEAADKLGLTMAFTGVRVFRH.

An MGS-like domain is found at 8–158 (PSAPDLVAPK…KNHGYVAVCT (151 aa)).

It belongs to the PurH family.

It carries out the reaction (6R)-10-formyltetrahydrofolate + 5-amino-1-(5-phospho-beta-D-ribosyl)imidazole-4-carboxamide = 5-formamido-1-(5-phospho-D-ribosyl)imidazole-4-carboxamide + (6S)-5,6,7,8-tetrahydrofolate. The catalysed reaction is IMP + H2O = 5-formamido-1-(5-phospho-D-ribosyl)imidazole-4-carboxamide. Its pathway is purine metabolism; IMP biosynthesis via de novo pathway; 5-formamido-1-(5-phospho-D-ribosyl)imidazole-4-carboxamide from 5-amino-1-(5-phospho-D-ribosyl)imidazole-4-carboxamide (10-formyl THF route): step 1/1. It functions in the pathway purine metabolism; IMP biosynthesis via de novo pathway; IMP from 5-formamido-1-(5-phospho-D-ribosyl)imidazole-4-carboxamide: step 1/1. This chain is Bifunctional purine biosynthesis protein PurH, found in Caulobacter vibrioides (strain ATCC 19089 / CIP 103742 / CB 15) (Caulobacter crescentus).